We begin with the raw amino-acid sequence, 276 residues long: Digeranylgeranylglyceryl phosphate synthase (276 aa).

8 helical membrane-spanning segments follow: residues 12–34, 38–60, 84–104, 107–127, 146–166, 202–222, 224–244, and 256–276; these read PHNCALAGLVGVLGSMVALGSVP, ILILVFLVVSLGCAGGNTINDYF, ALWYSLFLFAVGLALALLISL, FAFALLAYITMFLYAWKLKPL, GAIAVGKIGLAGTLAVCAFLV, VAAFFGVATVIASFLPVKAGV, VGYYAMVPVDLIILYAVYLIL, and QLLLKASIFLAVFAFLIAALM.

This sequence belongs to the UbiA prenyltransferase family. DGGGP synthase subfamily. Mg(2+) is required as a cofactor.

It is found in the cell membrane. The catalysed reaction is sn-3-O-(geranylgeranyl)glycerol 1-phosphate + (2E,6E,10E)-geranylgeranyl diphosphate = 2,3-bis-O-(geranylgeranyl)-sn-glycerol 1-phosphate + diphosphate. It functions in the pathway membrane lipid metabolism; glycerophospholipid metabolism. Functionally, prenyltransferase that catalyzes the transfer of the geranylgeranyl moiety of geranylgeranyl diphosphate (GGPP) to the C2 hydroxyl of (S)-3-O-geranylgeranylglyceryl phosphate (GGGP). This reaction is the second ether-bond-formation step in the biosynthesis of archaeal membrane lipids. This chain is Digeranylgeranylglyceryl phosphate synthase, found in Thermococcus gammatolerans (strain DSM 15229 / JCM 11827 / EJ3).